A 316-amino-acid polypeptide reads, in one-letter code: N-acetylmuramic acid 6-phosphate etherase (316 aa).

Positions 66–229 constitute an SIS domain; the sequence is IVAAIGRGGR…STASMIRLGK (164 aa). Glutamate 94 acts as the Proton donor in catalysis. Glutamate 125 is a catalytic residue.

Belongs to the GCKR-like family. MurNAc-6-P etherase subfamily. Homodimer.

It catalyses the reaction N-acetyl-D-muramate 6-phosphate + H2O = N-acetyl-D-glucosamine 6-phosphate + (R)-lactate. The protein operates within amino-sugar metabolism; 1,6-anhydro-N-acetylmuramate degradation. It functions in the pathway amino-sugar metabolism; N-acetylmuramate degradation. Its pathway is cell wall biogenesis; peptidoglycan recycling. Functionally, specifically catalyzes the cleavage of the D-lactyl ether substituent of MurNAc 6-phosphate, producing GlcNAc 6-phosphate and D-lactate. Together with AnmK, is also required for the utilization of anhydro-N-acetylmuramic acid (anhMurNAc) either imported from the medium or derived from its own cell wall murein, and thus plays a role in cell wall recycling. The sequence is that of N-acetylmuramic acid 6-phosphate etherase from Jannaschia sp. (strain CCS1).